A 1298-amino-acid polypeptide reads, in one-letter code: Phosphoribosylformylglycinamidine synthase (1298 aa).

Residues F303–K327 form a disordered region. ATP contacts are provided by residues G305–D316, T384–Y386, and A676. Mg(2+) is bound by residues D677, E716, N720, and D884. S886 contributes to the ATP binding site. The Glutamine amidotransferase type-1 domain occupies V1045–N1298. Residue C1138 is the Nucleophile of the active site. Catalysis depends on residues H1263 and E1265.

This sequence in the N-terminal section; belongs to the FGAMS family. In terms of assembly, monomer.

It localises to the cytoplasm. The catalysed reaction is N(2)-formyl-N(1)-(5-phospho-beta-D-ribosyl)glycinamide + L-glutamine + ATP + H2O = 2-formamido-N(1)-(5-O-phospho-beta-D-ribosyl)acetamidine + L-glutamate + ADP + phosphate + H(+). It participates in purine metabolism; IMP biosynthesis via de novo pathway; 5-amino-1-(5-phospho-D-ribosyl)imidazole from N(2)-formyl-N(1)-(5-phospho-D-ribosyl)glycinamide: step 1/2. Its function is as follows. Phosphoribosylformylglycinamidine synthase involved in the purines biosynthetic pathway. Catalyzes the ATP-dependent conversion of formylglycinamide ribonucleotide (FGAR) and glutamine to yield formylglycinamidine ribonucleotide (FGAM) and glutamate. This is Phosphoribosylformylglycinamidine synthase from Pseudomonas savastanoi pv. phaseolicola (strain 1448A / Race 6) (Pseudomonas syringae pv. phaseolicola (strain 1448A / Race 6)).